The chain runs to 118 residues: MARVKGGLGAKKRHNRTLKLAKGYRGARSKQYRVAKQSVMRALTSSYAGRKERKRQFRQLWIARINAAARLNGLSYSQFMHGLKLANVDLNRKVLADMAVTDAAGFAKLVEVAKSKLA.

This sequence belongs to the bacterial ribosomal protein bL20 family.

Its function is as follows. Binds directly to 23S ribosomal RNA and is necessary for the in vitro assembly process of the 50S ribosomal subunit. It is not involved in the protein synthesizing functions of that subunit. The polypeptide is Large ribosomal subunit protein bL20 (Agathobacter rectalis (strain ATCC 33656 / DSM 3377 / JCM 17463 / KCTC 5835 / VPI 0990) (Eubacterium rectale)).